The following is a 547-amino-acid chain: MTQNSYKIPIQGMTCTGCEEHVTEALEQAGAKDVSADFRRGEAIFELSDDQIEKAKQNISAAGYQPGEEESQPSENSVDFNRDGDYDLLIIGSGGAAFSAAIKANENGAKVAMVERGTVGGTCVNIGCVPSKTMLRAGEINGLAQNNPFTGLQTSTGAADLAQLTEQKDGLVSQMRQEKYIDLIEEYGFDLIRGEASFIDDKTIQVNGQNITSKSFLIATGASPAVPEIPGMNEVDYLTSTSALELKEVPQRLAVIGSGYIAAELGQMFHNLGTEVTLMQRSERLFKTYDPEISEAIDESLTEQGLNLITGVTYQKVEQNGKSTSIYIEVNGQEQVIEADQVLVATGRKPNTETLNLESAGVKTGKKGEVLTNEYLQTSNNRIYAAGDVTLGPQFVYVAAYEGGIVANNALGLAKRKIDLRFVPGVTFTNPSIATVGLTEQQAKEKGYDVKTSVLPLDAVPRALVNHETTGVYKLVVNAQTQKLIGAHIVSENAGDVIYAATLAVQFGLTIEDLTDSFAPYLTMAEGLKLAALTFDKDVSKLSCCAG.

The region spanning 4–67 (NSYKIPIQGM…NISAAGYQPG (64 aa)) is the HMA domain. A metal cation is bound by residues Cys-15 and Cys-18. FAD-binding residues include Ala-97, Gly-117, and Thr-122. Cys-123 and Cys-128 are disulfide-bonded. The FAD site is built by Lys-132, Ala-196, Asp-388, and Val-396. Positions 544 and 545 each coordinate Hg(2+).

It belongs to the class-I pyridine nucleotide-disulfide oxidoreductase family. As to quaternary structure, homodimer. FAD is required as a cofactor.

The enzyme catalyses Hg + NADP(+) + H(+) = Hg(2+) + NADPH. Its function is as follows. Resistance to Hg(2+) in bacteria appears to be governed by a specialized system which includes mercuric reductase. MerA protein is responsible for volatilizing mercury as Hg(0). This Staphylococcus aureus protein is Mercuric reductase (merA).